Consider the following 489-residue polypeptide: uncharacterized protein (489 aa).

Disordered stretches follow at residues 1–94 (MIEE…GSLD), 109–229 (NRNQ…SDDD), 300–389 (DDNI…TSIQ), and 428–461 (SESG…TLVK). Low complexity-rich tracts occupy residues 43 to 53 (LLVQQSNQSVK) and 64 to 77 (SNGF…NIHD). Positions 121–138 (NFSEDDEDDDAEDDDSSD) are enriched in acidic residues. Over residues 144–154 (KKNKPKKPSKL) the composition is skewed to basic residues. Over residues 155–164 (MKHDSVDGKN) the composition is skewed to basic and acidic residues. Over residues 173 to 199 (SKKKVQHQLKEKNKKKGIKNDKKKSKP) the composition is skewed to basic residues. Over residues 308–343 (NDNDNDNDDDNDNDNDNDNDNDNDNDDDENGEDNGE) the composition is skewed to acidic residues. Low complexity-rich tracts occupy residues 344-389 (DLNI…TSIQ) and 433-449 (SISS…SSKS).

This is an uncharacterized protein from Dictyostelium discoideum (Social amoeba).